The following is an 887-amino-acid chain: Degenerin-like protein unc-105 (887 aa).

A disordered region spans residues 1–33 (MAEDRIKSKLRRPASIESTMSSRTKPRHKPSPM). At 1–93 (MAEDRIKSKL…AATADGKWRW (93 aa)) the chain is on the cytoplasmic side. Residues 94–114 (FWYTAFTICLLALLIQIFFLI) form a helical membrane-spanning segment. Residues 115–698 (SKYRQYGKTV…SVLADLGGLT (584 aa)) are Extracellular-facing. N-linked (GlcNAc...) asparagine glycans are attached at residues N244, N450, N473, N581, and N599. The helical transmembrane segment at 699–719 (GLWIGASVVSLLEIVTLIVFA) threads the bilayer. The Cytoplasmic segment spans residues 720-887 (TQAYVRKRKG…YSAPYEHRKK (168 aa)). Disordered stretches follow at residues 794-815 (AIQEQSDDEEETTESSRTNGSC) and 859-887 (SNSEEEDAEDEVHREPEPFYSAPYEHRKK).

It belongs to the amiloride-sensitive sodium channel (TC 1.A.6) family. Expressed in body wall muscle.

The protein resides in the membrane. Ion channel which is permeable to small monovalent cations. Shown not to be H+-ion gated. May be mechanosensitive and is required for growth and muscle development. The protein is Degenerin-like protein unc-105 (unc-105) of Caenorhabditis elegans.